A 137-amino-acid polypeptide reads, in one-letter code: Large ribosomal subunit protein uL16 (137 aa).

The span at 1–16 (MLQPKRTKFRKMQKGR) shows a compositional bias: basic residues. Positions 1 to 22 (MLQPKRTKFRKMQKGRIRGEAK) are disordered.

The protein belongs to the universal ribosomal protein uL16 family. Part of the 50S ribosomal subunit.

Its function is as follows. Binds 23S rRNA and is also seen to make contacts with the A and possibly P site tRNAs. In Jannaschia sp. (strain CCS1), this protein is Large ribosomal subunit protein uL16.